The chain runs to 362 residues: Phosphoserine aminotransferase (362 aa).

Ser-9 and Arg-42 together coordinate L-glutamate. Pyridoxal 5'-phosphate contacts are provided by residues 76–77 (GR), Trp-102, Thr-153, Asp-174, and Gln-197. Lys-198 is subject to N6-(pyridoxal phosphate)lysine. Position 239–240 (239–240 (NT)) interacts with pyridoxal 5'-phosphate.

It belongs to the class-V pyridoxal-phosphate-dependent aminotransferase family. SerC subfamily. As to quaternary structure, homodimer. Pyridoxal 5'-phosphate is required as a cofactor.

The protein localises to the cytoplasm. It carries out the reaction O-phospho-L-serine + 2-oxoglutarate = 3-phosphooxypyruvate + L-glutamate. The catalysed reaction is 4-(phosphooxy)-L-threonine + 2-oxoglutarate = (R)-3-hydroxy-2-oxo-4-phosphooxybutanoate + L-glutamate. It functions in the pathway amino-acid biosynthesis; L-serine biosynthesis; L-serine from 3-phospho-D-glycerate: step 2/3. The protein operates within cofactor biosynthesis; pyridoxine 5'-phosphate biosynthesis; pyridoxine 5'-phosphate from D-erythrose 4-phosphate: step 3/5. Its function is as follows. Catalyzes the reversible conversion of 3-phosphohydroxypyruvate to phosphoserine and of 3-hydroxy-2-oxo-4-phosphonooxybutanoate to phosphohydroxythreonine. In Escherichia fergusonii (strain ATCC 35469 / DSM 13698 / CCUG 18766 / IAM 14443 / JCM 21226 / LMG 7866 / NBRC 102419 / NCTC 12128 / CDC 0568-73), this protein is Phosphoserine aminotransferase.